The sequence spans 488 residues: uncharacterized protein (488 aa).

Helical transmembrane passes span 2–22 (FGLP…VFLV), 27–47 (VHAF…GGMS), 59–79 (FGGT…MGSV), 106–126 (LAIT…FVIL), 176–196 (IGAM…GIVL), 241–261 (LLPI…HLFV), 275–295 (IVSF…ISVY), 314–334 (VKTA…GAVL), 347–367 (IANL…LVRF), 368–388 (IQGS…PILA), 438–458 (VPTT…NLIF), and 461–481 (DGSV…LFYI).

This sequence belongs to the GntP permease family.

It localises to the cell inner membrane. This is an uncharacterized protein from Haemophilus influenzae (strain ATCC 51907 / DSM 11121 / KW20 / Rd).